The following is a 290-amino-acid chain: ATP synthase gamma chain (290 aa).

The protein belongs to the ATPase gamma chain family. F-type ATPases have 2 components, CF(1) - the catalytic core - and CF(0) - the membrane proton channel. CF(1) has five subunits: alpha(3), beta(3), gamma(1), delta(1), epsilon(1). CF(0) has three main subunits: a, b and c.

It is found in the cell membrane. Its function is as follows. Produces ATP from ADP in the presence of a proton gradient across the membrane. The gamma chain is believed to be important in regulating ATPase activity and the flow of protons through the CF(0) complex. This chain is ATP synthase gamma chain, found in Buchnera aphidicola subsp. Diuraphis noxia.